The chain runs to 223 residues: Golgi SNAP receptor complex member 1 (223 aa).

Ser2 is subject to N-acetylserine. Residues 2-204 (SSQPSFVTIR…MKINTRRKKN (203 aa)) are Cytoplasmic-facing. Ser164 bears the Phosphoserine mark. Residues 205–222 (AFVLATITTLCILFLFFT) traverse the membrane as a helical; Anchor for type IV membrane protein segment. Trp223 is a topological domain (vesicular).

The protein belongs to the GOSR1 family. In terms of assembly, component of several multiprotein Golgi SNARE complexes. Identified in a Golgi SNARE complex consisting of t-SNARES SED5, YKT6, and the v-SNARE SFT1. Interacts with BET1. Interacts with BOS1. Interacts with SEC22. Interacts with PEP12. Interacts with self.

It localises to the golgi apparatus membrane. In terms of biological role, involved in transport from the ER to the Golgi apparatus as well as in intra-Golgi transport. It belongs to a super-family of proteins called t-SNAREs or soluble NSF (N-ethylmaleimide-sensitive factor) attachment protein receptor. Rescues alpha-factor maturation defects. This Saccharomyces cerevisiae (strain ATCC 204508 / S288c) (Baker's yeast) protein is Golgi SNAP receptor complex member 1 (GOS1).